Reading from the N-terminus, the 461-residue chain is Lysosomal dipeptide transporter MFSD1 (461 aa).

Residues 1-13 are compositionally biased toward basic and acidic residues; it reads MADREEHQGLLDG. Positions 1 to 22 are disordered; it reads MADREEHQGLLDGDRDEDEGDK. A Dileucine internalization motif motif is present at residues 10 to 11; sequence LL. 10 helical membrane-spanning segments follow: residues 37-57, 81-101, 111-131, 134-154, 264-284, 302-322, 331-351, 359-379, 390-410, and 416-436; these read LLHR…SYFC, QLYA…GFLL, TVIF…GALA, FWLM…LAVA, LWLI…FIGL, AINS…GFLV, WVML…FTFW, LLGV…AFVV, FMQS…GSIL, and LFLE…VVLL.

Belongs to the major facilitator superfamily. In terms of assembly, homodimer. Interacts with lysosomal protein GLMP (via lumenal domain); the interaction starts while both proteins are still in the endoplasmic reticulum and is required for stabilization of MFSD1 in lysosomes but has no direct effect on its targeting to lysosomes or transporter activity.

The protein localises to the lysosome membrane. The catalysed reaction is L-alpha-aminoacyl-L-arginine(out) = L-alpha-aminoacyl-L-arginine(in). It catalyses the reaction L-arginyl-L-alpha-amino acid(out) = L-arginyl-L-alpha-amino acid(in). It carries out the reaction L-arginyl-glycine(out) = L-arginyl-glycine(in). The enzyme catalyses L-alpha-aminoacyl-L-lysine(out) = L-alpha-aminoacyl-L-lysine(in). The catalysed reaction is L-aspartyl-L-lysine(out) = L-aspartyl-L-lysine(in). It catalyses the reaction L-alanyl-L-lysine(out) = L-alanyl-L-lysine(in). It carries out the reaction L-lysyl-L-alpha-amino acid(out) = L-lysyl-L-alpha-amino acid(in). The enzyme catalyses L-lysyl-L-alanine(out) = L-lysyl-L-alanine(in). The catalysed reaction is L-lysyl-L-lysine(out) = L-lysyl-L-lysine(in). It catalyses the reaction L-lysyl-glycine(out) = L-lysyl-glycine(in). It carries out the reaction L-alpha-aminoacyl-L-histidine(out) = L-alpha-aminoacyl-L-histidine(in). The enzyme catalyses L-histidyl-L-alpha-amino acid(out) = L-histidyl-L-alpha-amino acid(in). The catalysed reaction is L-histidyl-glycine(out) = L-histidyl-glycine(in). In terms of biological role, lysosomal dipeptide uniporter that selectively exports lysine, arginine or histidine-containing dipeptides with a net positive charge from the lysosome lumen into the cytosol. Could play a role in a specific type of protein O-glycosylation indirectly regulating macrophages migration and tissue invasion. Also essential for liver homeostasis. This chain is Lysosomal dipeptide transporter MFSD1 (mfsd1), found in Danio rerio (Zebrafish).